A 130-amino-acid polypeptide reads, in one-letter code: Small ribosomal subunit protein uS8 (130 aa).

The protein belongs to the universal ribosomal protein uS8 family. As to quaternary structure, part of the 30S ribosomal subunit. Contacts proteins S5 and S12.

Functionally, one of the primary rRNA binding proteins, it binds directly to 16S rRNA central domain where it helps coordinate assembly of the platform of the 30S subunit. The chain is Small ribosomal subunit protein uS8 from Pseudomonas putida (strain ATCC 700007 / DSM 6899 / JCM 31910 / BCRC 17059 / LMG 24140 / F1).